The primary structure comprises 605 residues: Adaptin medium chain homolog APM2 (605 aa).

Residues 150–196 (EEWSPGEESSSSSGSDSDSEYSNTNKRKDKKKKRKKKKGTKGKSVGK) are disordered. A compositionally biased stretch (low complexity) spans 155–171 (GEESSSSSGSDSDSEYS). Residues 174–196 (NKRKDKKKKRKKKKGTKGKSVGK) are compositionally biased toward basic residues. Residues 269 to 604 (KNEFFLDVIE…TVSDEEYAYI (336 aa)) form the MHD domain.

Belongs to the adaptor complexes medium subunit family. In terms of assembly, component of the AP-1R complex composed of at least APM2, APL4 and APS1. Interacts with MIL1. Interacts with APL2.

The protein localises to the golgi apparatus membrane. The protein resides in the early endosome membrane. Its subcellular location is the cytoplasmic vesicle. It localises to the clathrin-coated vesicle membrane. Its function is as follows. Component of the AP-1-related (AP-1R) complex, an adapter protein complex that mediates of cargo protein sorting in clathrin-coated vesicles. AP-1R has a specific role in SNARE SNC1 sorting. In contrast to the APM1-containing AP-1 complex, AP-1R is incapable of sorting CHS3. This Saccharomyces cerevisiae (strain ATCC 204508 / S288c) (Baker's yeast) protein is Adaptin medium chain homolog APM2 (APM2).